We begin with the raw amino-acid sequence, 285 residues long: Glycine--tRNA ligase alpha subunit (285 aa).

This sequence belongs to the class-II aminoacyl-tRNA synthetase family. In terms of assembly, tetramer of two alpha and two beta subunits.

The protein localises to the cytoplasm. The catalysed reaction is tRNA(Gly) + glycine + ATP = glycyl-tRNA(Gly) + AMP + diphosphate. The protein is Glycine--tRNA ligase alpha subunit of Thermodesulfovibrio yellowstonii (strain ATCC 51303 / DSM 11347 / YP87).